Reading from the N-terminus, the 165-residue chain is Chorismate pyruvate-lyase (165 aa).

Substrate contacts are provided by M35, R77, L115, and E156.

Belongs to the UbiC family. In terms of assembly, monomer.

It localises to the cytoplasm. It catalyses the reaction chorismate = 4-hydroxybenzoate + pyruvate. Its pathway is cofactor biosynthesis; ubiquinone biosynthesis. Its function is as follows. Removes the pyruvyl group from chorismate, with concomitant aromatization of the ring, to provide 4-hydroxybenzoate (4HB) for the ubiquinone pathway. This Escherichia coli O17:K52:H18 (strain UMN026 / ExPEC) protein is Chorismate pyruvate-lyase.